The sequence spans 611 residues: Autophagy-related protein 22-2 (611 aa).

The segment at 1 to 24 (MRADDNPSARSLHAQFPGDDTRPT) is disordered. A helical membrane pass occupies residues 35–55 (YGWAAEVFTVCAMGSFLPITL). N-linked (GlcNAc...) asparagine glycosylation is present at Asn-78. A run of 3 helical transmembrane segments spans residues 116–136 (TASFAMYTFSVSVFVQAVLII), 151–171 (LLVAFAVIGSVCTMLFLSVVP), and 175–195 (IVGALFAIVANTCFGASFVLL). N-linked (GlcNAc...) asparagine glycosylation is present at Asn-221. Helical transmembrane passes span 286-306 (IGIGYIGAVILQIICILVIIA) and 316-336 (LVLFLIGLWWFVFTIPAALWL). Asn-353 carries N-linked (GlcNAc...) asparagine glycosylation. Transmembrane regions (helical) follow at residues 380–400 (ILLFLTAWFLLSDGIATVSGT), 414–434 (AALGLINVVTMMAGVFGAFSW), 449–469 (IIACILLFELIPIYGLLGFVP), 483–503 (WEMFPLGIVYGLVMGGLSSYC), 521–541 (ALYAITDKGSSIFGPAIVGLI), and 551–571 (AFVFLAVLIFLPLPLMLLVDV).

It belongs to the ATG22 family.

It is found in the vacuole membrane. Vacuolar effluxer which mediate the efflux of amino acids resulting from autophagic degradation. The release of autophagic amino acids allows the maintenance of protein synthesis and viability during nitrogen starvation. The chain is Autophagy-related protein 22-2 (atg22-2) from Aspergillus clavatus (strain ATCC 1007 / CBS 513.65 / DSM 816 / NCTC 3887 / NRRL 1 / QM 1276 / 107).